A 454-amino-acid polypeptide reads, in one-letter code: Bifunctional protein GlmU (454 aa).

Residues 1–229 (MQRYAVVLAA…FDEIMGVNDR (229 aa)) are pyrophosphorylase. UDP-N-acetyl-alpha-D-glucosamine is bound by residues 8–11 (LAAG), K22, Q72, and 77–78 (GT). Mg(2+) is bound at residue D102. UDP-N-acetyl-alpha-D-glucosamine contacts are provided by G139, E154, and N227. A Mg(2+)-binding site is contributed by N227. The linker stretch occupies residues 230 to 250 (VALSKAEQAMRQRINEYHMRN). The tract at residues 251-454 (GVTLIDPSST…KPGYLNKNKE (204 aa)) is N-acetyltransferase. UDP-N-acetyl-alpha-D-glucosamine is bound by residues R332 and K350. H362 serves as the catalytic Proton acceptor. UDP-N-acetyl-alpha-D-glucosamine is bound by residues Y365 and N376. Acetyl-CoA-binding positions include 385-386 (NY), A422, and R439.

This sequence in the N-terminal section; belongs to the N-acetylglucosamine-1-phosphate uridyltransferase family. The protein in the C-terminal section; belongs to the transferase hexapeptide repeat family. In terms of assembly, homotrimer. Requires Mg(2+) as cofactor.

The protein localises to the cytoplasm. The catalysed reaction is alpha-D-glucosamine 1-phosphate + acetyl-CoA = N-acetyl-alpha-D-glucosamine 1-phosphate + CoA + H(+). It catalyses the reaction N-acetyl-alpha-D-glucosamine 1-phosphate + UTP + H(+) = UDP-N-acetyl-alpha-D-glucosamine + diphosphate. It functions in the pathway nucleotide-sugar biosynthesis; UDP-N-acetyl-alpha-D-glucosamine biosynthesis; N-acetyl-alpha-D-glucosamine 1-phosphate from alpha-D-glucosamine 6-phosphate (route II): step 2/2. Its pathway is nucleotide-sugar biosynthesis; UDP-N-acetyl-alpha-D-glucosamine biosynthesis; UDP-N-acetyl-alpha-D-glucosamine from N-acetyl-alpha-D-glucosamine 1-phosphate: step 1/1. It participates in bacterial outer membrane biogenesis; LPS lipid A biosynthesis. In terms of biological role, catalyzes the last two sequential reactions in the de novo biosynthetic pathway for UDP-N-acetylglucosamine (UDP-GlcNAc). The C-terminal domain catalyzes the transfer of acetyl group from acetyl coenzyme A to glucosamine-1-phosphate (GlcN-1-P) to produce N-acetylglucosamine-1-phosphate (GlcNAc-1-P), which is converted into UDP-GlcNAc by the transfer of uridine 5-monophosphate (from uridine 5-triphosphate), a reaction catalyzed by the N-terminal domain. This is Bifunctional protein GlmU from Staphylococcus carnosus (strain TM300).